Here is a 263-residue protein sequence, read N- to C-terminus: HTH-type transcriptional repressor NanR (263 aa).

The segment at 1–21 (MGLMNAFDSQTEDSSPVIGRN) is disordered. In terms of domain architecture, HTH gntR-type spans 30–98 (KKLSEMVEEE…NGERARVSRP (69 aa)). A DNA-binding region (H-T-H motif) is located at residues 58-77 (ERELMAFFNVGRPSVREALA).

It belongs to the NanR family.

Transcriptional repressor that controls expression of the genes required for the catabolism of sialic acids. This Escherichia coli O7:K1 (strain IAI39 / ExPEC) protein is HTH-type transcriptional repressor NanR.